Reading from the N-terminus, the 374-residue chain is Queuine tRNA-ribosyltransferase (374 aa).

D89 serves as the catalytic Proton acceptor. Residues 89–93 (DSGGF), D143, Q187, and G214 each bind substrate. The tract at residues 245 to 251 (GVGKPED) is RNA binding. D264 (nucleophile) is an active-site residue. The RNA binding; important for wobble base 34 recognition stretch occupies residues 269 to 273 (TRNAR). Zn(2+) is bound by residues C302, C304, C307, and H333.

Belongs to the queuine tRNA-ribosyltransferase family. In terms of assembly, homodimer. Within each dimer, one monomer is responsible for RNA recognition and catalysis, while the other monomer binds to the replacement base PreQ1. It depends on Zn(2+) as a cofactor.

The catalysed reaction is 7-aminomethyl-7-carbaguanine + guanosine(34) in tRNA = 7-aminomethyl-7-carbaguanosine(34) in tRNA + guanine. The protein operates within tRNA modification; tRNA-queuosine biosynthesis. Functionally, catalyzes the base-exchange of a guanine (G) residue with the queuine precursor 7-aminomethyl-7-deazaguanine (PreQ1) at position 34 (anticodon wobble position) in tRNAs with GU(N) anticodons (tRNA-Asp, -Asn, -His and -Tyr). Catalysis occurs through a double-displacement mechanism. The nucleophile active site attacks the C1' of nucleotide 34 to detach the guanine base from the RNA, forming a covalent enzyme-RNA intermediate. The proton acceptor active site deprotonates the incoming PreQ1, allowing a nucleophilic attack on the C1' of the ribose to form the product. After dissociation, two additional enzymatic reactions on the tRNA convert PreQ1 to queuine (Q), resulting in the hypermodified nucleoside queuosine (7-(((4,5-cis-dihydroxy-2-cyclopenten-1-yl)amino)methyl)-7-deazaguanosine). The protein is Queuine tRNA-ribosyltransferase of Shewanella sp. (strain W3-18-1).